The following is a 585-amino-acid chain: Serine/threonine-protein kinase Nek3 (585 aa).

Residues Y4 to L258 form the Protein kinase domain. ATP contacts are provided by residues I10 to A18 and K33. D129 acts as the Proton acceptor in catalysis. 2 disordered regions span residues G354–N413 and D489–L511. 2 stretches are compositionally biased toward polar residues: residues R400 to N413 and S498 to L511.

This sequence belongs to the protein kinase superfamily. NEK Ser/Thr protein kinase family. NIMA subfamily. Interacts with PLIM2B. As to expression, expressed in pollen grains.

It catalyses the reaction L-seryl-[protein] + ATP = O-phospho-L-seryl-[protein] + ADP + H(+). The enzyme catalyses L-threonyl-[protein] + ATP = O-phospho-L-threonyl-[protein] + ADP + H(+). In terms of biological role, may be involved in plant development processes. May function downstream of DCW11 in retrograde signaling from the mitochondria to the nucleus. Seems to be involved in the mechanism of cytoplasmic male sterility (CMS) occurrence. This Oryza sativa subsp. japonica (Rice) protein is Serine/threonine-protein kinase Nek3.